A 225-amino-acid polypeptide reads, in one-letter code: uncharacterized protein (225 aa).

Positions 1–22 are cleaved as a signal peptide; that stretch reads MLQHYSVSWKKGLAALCLLAVA. Positions 161 to 190 constitute a 4Fe-4S ferredoxin-type domain; the sequence is GNLTAAEEKKTGCLVCLDSCPVGIVSNATY.

This is an uncharacterized protein from Escherichia coli (strain K12).